The sequence spans 156 residues: Zinc finger SWIM domain-containing protein 7 homolog (156 aa).

The segment at 82–120 (YMCLIQGDYCSCPSFNFSVLLKSDSVYCKHQISSILAEI) adopts an SWIM-type zinc-finger fold.

It belongs to the SWS1 family.

It is found in the nucleus. Functionally, may be involved in the homologous recombination repair (HRR) pathway of double-stranded DNA breaks arising during DNA replication or induced by DNA-damaging agents. The protein is Zinc finger SWIM domain-containing protein 7 homolog (zswim7) of Dictyostelium discoideum (Social amoeba).